A 476-amino-acid polypeptide reads, in one-letter code: Bifunctional protein HldE (476 aa).

The ribokinase stretch occupies residues 1–319 (MKPTLPNYDQ…EAIHGSQDSG (319 aa)). 195 to 198 (NMLE) contacts ATP. Aspartate 264 is an active-site residue. The tract at residues 344-476 (MTNGCFDILH…IIEAIKGGRG (133 aa)) is cytidylyltransferase.

It in the N-terminal section; belongs to the carbohydrate kinase PfkB family. The protein in the C-terminal section; belongs to the cytidylyltransferase family. Homodimer.

The enzyme catalyses D-glycero-beta-D-manno-heptose 7-phosphate + ATP = D-glycero-beta-D-manno-heptose 1,7-bisphosphate + ADP + H(+). It carries out the reaction D-glycero-beta-D-manno-heptose 1-phosphate + ATP + H(+) = ADP-D-glycero-beta-D-manno-heptose + diphosphate. Its pathway is nucleotide-sugar biosynthesis; ADP-L-glycero-beta-D-manno-heptose biosynthesis; ADP-L-glycero-beta-D-manno-heptose from D-glycero-beta-D-manno-heptose 7-phosphate: step 1/4. It functions in the pathway nucleotide-sugar biosynthesis; ADP-L-glycero-beta-D-manno-heptose biosynthesis; ADP-L-glycero-beta-D-manno-heptose from D-glycero-beta-D-manno-heptose 7-phosphate: step 3/4. Functionally, catalyzes the phosphorylation of D-glycero-D-manno-heptose 7-phosphate at the C-1 position to selectively form D-glycero-beta-D-manno-heptose-1,7-bisphosphate. Its function is as follows. Catalyzes the ADP transfer from ATP to D-glycero-beta-D-manno-heptose 1-phosphate, yielding ADP-D-glycero-beta-D-manno-heptose. In Aliivibrio fischeri (strain ATCC 700601 / ES114) (Vibrio fischeri), this protein is Bifunctional protein HldE.